Here is a 225-residue protein sequence, read N- to C-terminus: UPF0758 protein Shewmr4_3597 (225 aa).

One can recognise an MPN domain in the interval Val102–Ile224. His173, His175, and Asp186 together coordinate Zn(2+). The JAMM motif signature appears at His173–Asp186.

The protein belongs to the UPF0758 family.

The protein is UPF0758 protein Shewmr4_3597 of Shewanella sp. (strain MR-4).